A 217-amino-acid chain; its full sequence is Probable nicotinate-nucleotide adenylyltransferase (217 aa).

Belongs to the NadD family.

The catalysed reaction is nicotinate beta-D-ribonucleotide + ATP + H(+) = deamido-NAD(+) + diphosphate. Its pathway is cofactor biosynthesis; NAD(+) biosynthesis; deamido-NAD(+) from nicotinate D-ribonucleotide: step 1/1. Functionally, catalyzes the reversible adenylation of nicotinate mononucleotide (NaMN) to nicotinic acid adenine dinucleotide (NaAD). In Baumannia cicadellinicola subsp. Homalodisca coagulata, this protein is Probable nicotinate-nucleotide adenylyltransferase.